The primary structure comprises 884 residues: MGAIGGDELVQWDKMGAAEAVNGGCGGAGKMDRIQVLVRLRPLSEKEVARREPAEWECINDSTVMFRSTFPDRPTAPTAYTFDRVFHSDCSTKEVYEEGVKEVALSVVSGINSSIFAYGQTSSGKTYTMTGVTEYTVADIYDYINKHEERAFVLKFSAIEIYNEVIRDLLSAENTPLRLWDDAEKGTYVENLTEVVLRDWNHLKGLISVCEAQRRTGETFLNEKSSRSHQILRLTVESSAREFLGKDKSTTLVASANFVDLAGSERASQALSAGTRLKEGCHINRSLLALGTVIRKLSMGSNAHIPYRDSKLTRILQPSLGGNARTAIICTLSPATSHIEQSRNTLLFGSCAKEVVTNAQVNVVMSDKALVKHLQKELARLESELRHPVQSSSLETLLKEKDNQIRKMEKEIKELKSQRDLAQSRLQDLLQSVGDHDLNRQVQGKHSVRSPPSVGMPPSVSRDDSSQVSHDDSDLYKEVRCIESNRTGGNDQLDLSAGESSSPQDSNMNSGLHGNDSNASVNSRHSRPSGEAPITLEEHLENIRRPFVSLAKDLGSSTRNSSNLRVIGRSRSCRSLTGSTMFDDMEMDDCTPLNRSLVEFPGRPVESHRRGSALHYDAETDTLSRAGSMSSEISTFKDAKTNGSVACDTEFTGIGEFVAELKEMAQVHYQKQLGDQNANGKSIGLDPIEGVSQSPSRWPLEFEKKQQEIIELWQACSISLVHRTYFFLLFKGEAADSIYMEVELRRLSFLRDTYSRGSTPSNAIVGSLSTSPVASAKKLQREREMLARQMQKRLSTEEREHTYTKWGVSLDSKRRKLQVARRLWTETKDLEHVRESASLVAKLIGLQEPGQVLKEMFGLSFAPQQQPTRRRSSNGWRYGIPSFA.

One can recognise a Kinesin motor domain in the interval 33 to 355 (RIQVLVRLRP…LLFGSCAKEV (323 aa)). 119–126 (GQTSSGKT) lines the ATP pocket. A coiled-coil region spans residues 364–435 (VMSDKALVKH…LQDLLQSVGD (72 aa)). The segment at 434–530 (GDHDLNRQVQ…VNSRHSRPSG (97 aa)) is disordered. Over residues 449-460 (RSPPSVGMPPSV) the composition is skewed to low complexity. The segment covering 461–483 (SRDDSSQVSHDDSDLYKEVRCIE) has biased composition (basic and acidic residues). The span at 498–523 (GESSSPQDSNMNSGLHGNDSNASVNS) shows a compositional bias: polar residues.

This sequence belongs to the TRAFAC class myosin-kinesin ATPase superfamily. Kinesin family. KIN-7 subfamily.

The sequence is that of Kinesin-like protein KIN-7C from Oryza sativa subsp. japonica (Rice).